The sequence spans 269 residues: Tryptophan synthase alpha chain (269 aa).

Catalysis depends on proton acceptor residues E49 and D60.

This sequence belongs to the TrpA family. Tetramer of two alpha and two beta chains.

It carries out the reaction (1S,2R)-1-C-(indol-3-yl)glycerol 3-phosphate + L-serine = D-glyceraldehyde 3-phosphate + L-tryptophan + H2O. It participates in amino-acid biosynthesis; L-tryptophan biosynthesis; L-tryptophan from chorismate: step 5/5. Its function is as follows. The alpha subunit is responsible for the aldol cleavage of indoleglycerol phosphate to indole and glyceraldehyde 3-phosphate. This Acidovorax sp. (strain JS42) protein is Tryptophan synthase alpha chain.